Here is a 96-residue protein sequence, read N- to C-terminus: UPF0235 protein Sputw3181_1321 (96 aa).

Belongs to the UPF0235 family.

This chain is UPF0235 protein Sputw3181_1321, found in Shewanella sp. (strain W3-18-1).